Consider the following 96-residue polypeptide: UPF0102 protein ML1607 (96 aa).

It belongs to the UPF0102 family.

This chain is UPF0102 protein ML1607, found in Mycobacterium leprae (strain TN).